A 248-amino-acid chain; its full sequence is NLP effector protein Pc121494 (248 aa).

The N-terminal stretch at 1–19 is a signal peptide; sequence MKFIAVLIAAIASLSAVQA. The Hepta-peptide GHRHDWE motif motif lies at 124–130; the sequence is GHRNGWE. N-linked (GlcNAc...) asparagine glycosylation is present at Asn-143.

This sequence belongs to the Necrosis inducing protein (NPP1) family.

It localises to the secreted. Functionally, secreted effector that contributes strongly to virulence during infection by P.capsici. This Phytophthora capsici protein is NLP effector protein Pc121494.